Reading from the N-terminus, the 132-residue chain is Small ribosomal subunit protein uS8 (132 aa).

This sequence belongs to the universal ribosomal protein uS8 family. Part of the 30S ribosomal subunit. Contacts proteins S5 and S12.

In terms of biological role, one of the primary rRNA binding proteins, it binds directly to 16S rRNA central domain where it helps coordinate assembly of the platform of the 30S subunit. The chain is Small ribosomal subunit protein uS8 from Cereibacter sphaeroides (strain ATCC 17029 / ATH 2.4.9) (Rhodobacter sphaeroides).